Consider the following 245-residue polypeptide: Lytic switch protein BZLF1 (245 aa).

The segment at 1–167 (MMDPNSTSED…RTRKPQQPES (167 aa)) is transactivation. A phosphothreonine; by host mark is found at Thr-14 and Thr-159. Positions 157 to 194 (RRTRKPQQPESLEECDSELEIKRYKNRVASRKCRAKFK) match the Bipartite nuclear localization signal motif. Residues Ser-167, Ser-173, and Ser-186 each carry the phosphoserine; by host modification. In terms of domain architecture, bZIP spans 170-228 (ECDSELEIKRYKNRVASRKCRAKFKQLLQHYREVAAAKSSENDRLRLLLKQMCPSLDVD). The interval 178-195 (KRYKNRVASRKCRAKFKQ) is basic motif. Residues 196-228 (LLQHYREVAAAKSSENDRLRLLLKQMCPSLDVD) are leucine-zipper. Residues 229–245 (SIIPRTPDVLHEDLLNF) are accessory activation domain.

It belongs to the bZIP family. In terms of assembly, homodimer. Interacts (via b-ZIP domain) with the DNA polymerase processivity factor BMRF1 (via N-terminus); this interaction may inhibit BZLF1-induced transcription of the BMRF1 promoter. Interacts with human UBN1, CRTC2 and RACK1. Interacts (via N-terminus) with human PAX5 (via N-terminus); this interaction inhibits BZLF1-mediated lytic viral reactivation. Interacts (via leucine-zipper domain) with host CEBPA; this interaction induces G1 host cell cycle arrest. Interacts (via C-terminus) with host TP53BP1 (via C-terminus); this interaction is involved in the activation of the viral lytic cycle. Interacts with host chromatin-remodeling ATPase INO80; this interaction participates to the activation of early lytic viral genes by BZLF1. Interacts with host regulator of chromatin SMARCA5/hSNF2H; this interaction participates to the activation of early lytic viral genes by BZLF1. Interacts with host PLSCR1/Phospholipid scramblase 1; this interaction negatively regulates the transcriptional regulatory activity of BZLF1 by preventing the formation of the BZLF1-CBP complex.

The protein localises to the host nucleus. In terms of biological role, transcription factor that acts as a molecular switch to induce the transition from the latent to the lytic or productive phase of the virus cycle. Mediates the switch from the latent to the lytic cycle of infection in cells containing a highly methylated viral genome. Probably binds to silenced chromatin and recruits host chromatin-remodeling enzymes. Regulates this switch by binding to 2 types of ZEBRA response elements (ZREs): the CpG-free AP-1 like elements (latency) and the methylated CpG-containing elements (lytic replication). Activates preferentially the methylated forms of the viral lytic R (BRLF1) and Na (BRRF1) gene promoters, the latters being the first genes activated during Z-mediated reactivation in latently infected cells. BZLF1 and BRLF1 act together to trigger lytic replication. Also binds the lytic origin of replication, oriLyt. Induces G1 cell cycle arrest by stabilizing the host CCAAT/enhancer binding protein CEBPA. This function is important because the lytic cycle preferentially takes place in host cells arrested in G1. The polypeptide is Lytic switch protein BZLF1 (Epstein-Barr virus (strain B95-8) (HHV-4)).